We begin with the raw amino-acid sequence, 62 residues long: Glucagon (62 aa).

This sequence belongs to the glucagon family.

It is found in the secreted. In terms of biological role, promotes hydrolysis of glycogen and lipids, and raises the blood sugar level. This Scyliorhinus canicula (Small-spotted catshark) protein is Glucagon (gcg).